A 304-amino-acid chain; its full sequence is Nod factor export ATP-binding protein I (304 aa).

The ABC transporter domain occupies Ile-6 to Tyr-236. Gly-38–Thr-45 serves as a coordination point for ATP.

It belongs to the ABC transporter superfamily. Lipooligosaccharide exporter (TC 3.A.1.102) family. The complex is composed of two ATP-binding proteins (NodI) and two transmembrane proteins (NodJ).

The protein localises to the cell inner membrane. Its function is as follows. Part of the ABC transporter complex NodIJ involved in the export of the nodulation factors (Nod factors), the bacterial signal molecules that induce symbiosis and subsequent nodulation induction. Nod factors are LCO (lipo-chitin oligosaccharide), a modified beta-1,4-linked N-acetylglucosamine oligosaccharide. This subunit is responsible for energy coupling to the transport system. This chain is Nod factor export ATP-binding protein I, found in Burkholderia pseudomallei (strain K96243).